Here is a 447-residue protein sequence, read N- to C-terminus: Probable 7-dehydrocholesterol reductase (447 aa).

Transmembrane regions (helical) follow at residues 24–44, 71–91, 102–124, 133–153, 157–177, 244–264, 281–301, and 309–329; these read LTTA…YLIT, IPSF…FQLI, FVPH…LVYY, IITH…PTII, WGSI…LAYF, YVSN…VDFF, FGWM…TLQA, and IDLS…GYII. Residues lysine 337, arginine 341, isoleucine 367, tryptophan 372, and 379 to 380 contribute to the NADP(+) site; that span reads NY. The chain crosses the membrane as a helical span at residues 393–413; sequence ACGFSHFIPYFYCVYMTILLV. Residues aspartate 419, 423–427, and tyrosine 434 contribute to the NADP(+) site; that span reads CSRKY.

This sequence belongs to the ERG4/ERG24 family.

The protein localises to the membrane. The catalysed reaction is cholesterol + NADP(+) = 7-dehydrocholesterol + NADPH + H(+). It functions in the pathway steroid biosynthesis; cholesterol biosynthesis. Functionally, catalyzes the last step of the cholesterol synthesis pathway, which transforms cholesta-5,7-dien-3beta-ol (7-dehydrocholesterol,7-DHC) into cholesterol by reducing the C7-C8 double bond of its sterol core. The protein is Probable 7-dehydrocholesterol reductase (DHCR7) of Acanthamoeba polyphaga (Amoeba).